A 382-amino-acid chain; its full sequence is tRNA-specific 2-thiouridylase MnmA (382 aa).

ATP contacts are provided by residues 18 to 25 (AMSGGVDS) and Leu-44. Catalysis depends on Cys-112, which acts as the Nucleophile. An intrachain disulfide couples Cys-112 to Cys-209. Gly-136 is an ATP binding site. Residues 159 to 161 (RDQ) are interaction with tRNA. Cys-209 functions as the Cysteine persulfide intermediate in the catalytic mechanism.

This sequence belongs to the MnmA/TRMU family.

It is found in the cytoplasm. It carries out the reaction S-sulfanyl-L-cysteinyl-[protein] + uridine(34) in tRNA + AH2 + ATP = 2-thiouridine(34) in tRNA + L-cysteinyl-[protein] + A + AMP + diphosphate + H(+). In terms of biological role, catalyzes the 2-thiolation of uridine at the wobble position (U34) of tRNA, leading to the formation of s(2)U34. The chain is tRNA-specific 2-thiouridylase MnmA from Methylobacterium sp. (strain 4-46).